The primary structure comprises 452 residues: Tubulin alpha-1D chain (452 aa).

The MREC motif motif lies at 1 to 4; the sequence is MREC. Glutamine 11 provides a ligand contact to GTP. Lysine 40 carries the post-translational modification N6-acetyllysine. 7 residues coordinate GTP: glutamate 71, serine 140, glycine 144, threonine 145, threonine 179, asparagine 206, and asparagine 228. Residue glutamate 71 participates in Mg(2+) binding. Glutamate 254 is an active-site residue. Tyrosine 282 carries the 3'-nitrotyrosine modification. The disordered stretch occupies residues 432 to 452; that stretch reads YEEVGMDSVEGEGEEEEGDEY. Serine 439 carries the phosphoserine modification. Glutamate 446 carries the 5-glutamyl polyglutamate modification. Tyrosine 452 is subject to 3'-nitrotyrosine.

This sequence belongs to the tubulin family. In terms of assembly, dimer of alpha and beta chains. A typical microtubule is a hollow water-filled tube with an outer diameter of 25 nm and an inner diameter of 15 nM. Alpha-beta heterodimers associate head-to-tail to form protofilaments running lengthwise along the microtubule wall with the beta-tubulin subunit facing the microtubule plus end conferring a structural polarity. Microtubules usually have 13 protofilaments but different protofilament numbers can be found in some organisms and specialized cells. Mg(2+) serves as cofactor. In terms of processing, some glutamate residues at the C-terminus are polyglycylated, resulting in polyglycine chains on the gamma-carboxyl group. Glycylation is mainly limited to tubulin incorporated into axonemes (cilia and flagella) whereas glutamylation is prevalent in neuronal cells, centrioles, axonemes, and the mitotic spindle. Both modifications can coexist on the same protein on adjacent residues, and lowering polyglycylation levels increases polyglutamylation, and reciprocally. Cilia and flagella glycylation is required for their stability and maintenance. Flagella glycylation controls sperm motility. Some glutamate residues at the C-terminus are polyglutamylated, resulting in polyglutamate chains on the gamma-carboxyl group. Polyglutamylation plays a key role in microtubule severing by spastin (SPAST). SPAST preferentially recognizes and acts on microtubules decorated with short polyglutamate tails: severing activity by SPAST increases as the number of glutamates per tubulin rises from one to eight, but decreases beyond this glutamylation threshold. Glutamylation is also involved in cilia motility. Post-translationally, acetylation of alpha chains at Lys-40 is located inside the microtubule lumen. This modification has been correlated with increased microtubule stability, intracellular transport and ciliary assembly. In terms of processing, methylation of alpha chains at Lys-40 is found in mitotic microtubules and is required for normal mitosis and cytokinesis contributing to genomic stability. Nitration of Tyr-452 is irreversible and interferes with normal dynein intracellular distribution. Post-translationally, undergoes a tyrosination/detyrosination cycle, the cyclic removal and re-addition of a C-terminal tyrosine residue by the enzymes tubulin tyrosine carboxypeptidase (MATCAP, VASH1 or VASH2) and tubulin tyrosine ligase (TTL), respectively. In terms of processing, tyrosination promotes microtubule interaction with CAP-Gly domain-containing proteins such as CLIP1, CLIP2 and DCTN1. Tyrosination regulates the initiation of dynein-dynactin motility via interaction with DCTN1, which brings the dynein-dynactin complex into contact with microtubules. In neurons, tyrosinated tubulins mediate the initiation of retrograde vesicle transport. Detyrosination is involved in metaphase plate congression by guiding chromosomes during mitosis: detyrosination promotes interaction with CENPE, promoting pole-proximal transport of chromosomes toward the equator. Detyrosination increases microtubules-dependent mechanotransduction in dystrophic cardiac and skeletal muscle. In cardiomyocytes, detyrosinated microtubules are required to resist to contractile compression during contraction: detyrosination promotes association with desmin (DES) at force-generating sarcomeres, leading to buckled microtubules and mechanical resistance to contraction.

The protein resides in the cytoplasm. It localises to the cytoskeleton. It catalyses the reaction GTP + H2O = GDP + phosphate + H(+). Its function is as follows. Tubulin is the major constituent of microtubules, a cylinder consisting of laterally associated linear protofilaments composed of alpha- and beta-tubulin heterodimers. Microtubules grow by the addition of GTP-tubulin dimers to the microtubule end, where a stabilizing cap forms. Below the cap, tubulin dimers are in GDP-bound state, owing to GTPase activity of alpha-tubulin. This chain is Tubulin alpha-1D chain (TUBA1D), found in Bos taurus (Bovine).